A 62-amino-acid chain; its full sequence is Large ribosomal subunit protein uL29 (62 aa).

Belongs to the universal ribosomal protein uL29 family.

The sequence is that of Large ribosomal subunit protein uL29 from Laribacter hongkongensis (strain HLHK9).